Consider the following 174-residue polypeptide: Transcriptional repressor NrdR (174 aa).

A zinc finger lies at 3–34 (CPFCQHNDTRVIDSRVSEDGTTIRRRRECEAC). Residues 49 to 139 (PTVVKSDGGR…VYRSFQDVAD (91 aa)) enclose the ATP-cone domain.

The protein belongs to the NrdR family. It depends on Zn(2+) as a cofactor.

In terms of biological role, negatively regulates transcription of bacterial ribonucleotide reductase nrd genes and operons by binding to NrdR-boxes. The protein is Transcriptional repressor NrdR of Xanthomonas axonopodis pv. citri (strain 306).